Reading from the N-terminus, the 309-residue chain is Probable lipid kinase YegS-like (309 aa).

Residues 1–134 (MAPSHWRLIL…IDLLRIDADH (134 aa)) enclose the DAGKc domain. ATP contacts are provided by residues Thr39, 65–71 (GDGTLSE), and Thr96. Mg(2+) contacts are provided by Leu219, Asp222, and Leu224. Catalysis depends on Glu280, which acts as the Proton acceptor.

The protein belongs to the diacylglycerol/lipid kinase family. YegS lipid kinase subfamily. Mg(2+) is required as a cofactor. Requires Ca(2+) as cofactor.

Its subcellular location is the cytoplasm. Probably phosphorylates lipids; the in vivo substrate is unknown. This Xanthomonas campestris pv. campestris (strain 8004) protein is Probable lipid kinase YegS-like.